The sequence spans 438 residues: Enolase (438 aa).

Residues histidine 159 and glutamate 168 each coordinate substrate. Catalysis depends on glutamate 211, which acts as the Proton donor. Aspartate 246, glutamate 297, and aspartate 322 together coordinate Mg(2+). Substrate-binding residues include glutamate 297 and aspartate 322. The active-site Proton acceptor is lysine 347. Residues 374–377 (SHRS) and lysine 398 each bind substrate.

The protein belongs to the enolase family. Homodimer. It depends on Mg(2+) as a cofactor.

Its subcellular location is the cytoplasm. It catalyses the reaction (2R)-2-phosphoglycerate = phosphoenolpyruvate + H2O. Its pathway is carbohydrate degradation; glycolysis; pyruvate from D-glyceraldehyde 3-phosphate: step 4/5. This chain is Enolase (emp-7), found in Neurospora crassa (strain ATCC 24698 / 74-OR23-1A / CBS 708.71 / DSM 1257 / FGSC 987).